A 659-amino-acid polypeptide reads, in one-letter code: Hemocyanin subunit B (659 aa).

The signal sequence occupies residues 1 to 18 (MVAKWCVLAMCLLVAVGA). Cu cation is bound by residues His198, His202, and His232. Residue Asn318 is glycosylated (N-linked (GlcNAc...) asparagine). Cu cation contacts are provided by His353, His357, and His393. A disulfide bond links Cys562 and Cys609.

The protein belongs to the tyrosinase family. Hemocyanin subfamily. In terms of assembly, 36-chain polymer consisting of 6 hexamers, each of which includes 4 different chains, A, B, C and D. As to expression, hemolymph.

The protein localises to the secreted. It localises to the extracellular space. Functionally, hemocyanins are copper-containing oxygen carriers occurring freely dissolved in the hemolymph of many mollusks and arthropods. The polypeptide is Hemocyanin subunit B (HCB) (Scutigera coleoptrata (House centipede)).